The primary structure comprises 427 residues: A-kinase anchor protein 5 (427 aa).

The interval 1 to 122 is disordered; the sequence is METTISEIHV…DADLSKKKAK (122 aa). Residues 1–170 are essential to the intracellular anchoring function; that stretch reads METTISEIHV…LDIQTQTPLN (170 aa). Residues 8 to 19 show a composition bias toward basic and acidic residues; that stretch reads IHVENKDEKRSA. Ser-22 is subject to Phosphoserine. The S-palmitoyl cysteine moiety is linked to residue Cys-36. Basic residues predominate over residues 37–48; sequence FKRRKKAAKALK. The AKAP CaM-binding motif lies at 76-96; it reads RGAWASLKRLVTRRKRSESSK. Basic and acidic residues predominate over residues 92–102; sequence SESSKQQKPLE. Cys-129 carries the S-palmitoyl cysteine lipid modification. Composition is skewed to polar residues over residues 171-182 and 242-252; these read DQATKAKSTQDL and VQPQQASPLET. 3 disordered regions span residues 171 to 205, 239 to 269, and 281 to 333; these read DQAT…STTS, KQDV…PPLP, and SNST…EESK. The segment covering 302–333 has biased composition (basic and acidic residues); the sequence is EETKPKDTELSQESDFKENGITEEKSKSEESK. Positions 392-405 are PKA-RII subunit binding domain; sequence LIETASSLVKNAIQ. Residues 410–427 are tethers NFATC2 to CRAC channels; sequence QLVNEMASDDNKINNLLQ.

Binding protein for dimer of the RII-beta regulatory subunit of cAMP-dependent protein kinase (PKA) and also for the protein kinase C (PKC) and the phosphatase calcineurin (PP2B). Each enzyme is inhibited when bound to the anchoring protein. Also binds the beta2-adrenergic receptor. Part of a complex containing AKAP5, ADCY5, ADCY6 and PDE4C. Interacts with ADCY8, and enhances its phosphorylation at lipid rafts. Interacts with ORAI1 (isoform alpha) (via N-terminus) upon store depletion and in response to LTC4. Does not interact with ORAI2 and ORAI3 paralogs. Interacts (via leucine zipper domain) with NFATC2/NFAT1. Interacts with calmodulin; the interaction is calcium-independent. Interacts with KCNQ2; the interaction may help KCNQ2 channel complex to retain calcium-bound calmodulin. Interacts with KCNK2; the channel is recruited to postsynaptic microdomains by AKAP5 where it can integrate neurotransmitter receptor signals. Part of a complex composed of AKAP5 and ADRB2. Post-translationally, palmitoylated. Palmitoylation at Cys-36 and Cys-129 play a key role in the targeting of AKAP5 to lipid rafts. Palmitoylation by ZDHHC2 is required for AKAP5 function in LTP-stimulated recycling endosome exocytosis. As to expression, predominantly in the cerebral cortex and the postsynaptic densities of the forebrain, and to a lesser extent in adrenal medulla, lung and anterior pituitary.

It localises to the postsynaptic recycling endosome membrane. Its subcellular location is the cell projection. It is found in the dendrite. The protein localises to the postsynaptic cell membrane. In terms of biological role, multivalent scaffold protein that anchors the cAMP-dependent protein kinase/PKA to cytoskeletal and/or organelle-associated proteins, targeting the signal carried by cAMP to specific intracellular effectors. Association with the beta2-adrenergic receptor (beta2-AR) not only regulates beta2-AR signaling pathway, but also the activation by PKA by switching off the beta2-AR signaling cascade. Plays a role in long term synaptic potentiation by regulating protein trafficking from the dendritic recycling endosomes to the plasma membrane and controlling both structural and functional plasticity at excitatory synapses. In hippocampal pyramidal neurons, recruits KCNK2/TREK-1 channel at postsynaptic dense bodies microdomains and converts it to a leak channel no longer sensitive to stimulation by arachidonic acid, acidic pH or mechanical stress, nor inhibited by Gq-coupled receptors but still under the negative control of Gs-coupled receptors. Associates with ORAI1 pore-forming subunit of CRAC channels in Ca(2+) signaling microdomains where it recruits NFATC2/NFAT1 and couples store-operated Ca(2+) influx to calmodulin and calcineurin signaling and activation of NFAT-dependent transcriptional responses. The protein is A-kinase anchor protein 5 (AKAP5) of Homo sapiens (Human).